A 429-amino-acid polypeptide reads, in one-letter code: Adenylosuccinate synthetase (429 aa).

GTP contacts are provided by residues 12–18 (GDEGKGK) and 40–42 (GHT). Catalysis depends on aspartate 13, which acts as the Proton acceptor. Residues aspartate 13 and glycine 40 each coordinate Mg(2+). IMP contacts are provided by residues 13–16 (DEGK), 38–41 (NAGH), threonine 129, arginine 143, glutamine 224, threonine 239, and arginine 303. Histidine 41 functions as the Proton donor in the catalytic mechanism. 299-305 (VTTGRAR) provides a ligand contact to substrate. GTP contacts are provided by residues arginine 305, 331–333 (KLD), and 413–415 (GVG).

It belongs to the adenylosuccinate synthetase family. Homodimer. It depends on Mg(2+) as a cofactor.

Its subcellular location is the cytoplasm. The catalysed reaction is IMP + L-aspartate + GTP = N(6)-(1,2-dicarboxyethyl)-AMP + GDP + phosphate + 2 H(+). It participates in purine metabolism; AMP biosynthesis via de novo pathway; AMP from IMP: step 1/2. Plays an important role in the de novo pathway of purine nucleotide biosynthesis. Catalyzes the first committed step in the biosynthesis of AMP from IMP. The sequence is that of Adenylosuccinate synthetase from Rhodococcus jostii (strain RHA1).